The following is a 397-amino-acid chain: tRNA-specific 2-thiouridylase MnmA (397 aa).

Residues 19–26 (AMSGGVDS) and Leu-45 each bind ATP. Residue Cys-113 is the Nucleophile of the active site. A disulfide bond links Cys-113 and Cys-210. Gly-137 contacts ATP. Positions 160 to 162 (RDQ) are interaction with tRNA. Residue Cys-210 is the Cysteine persulfide intermediate of the active site.

Belongs to the MnmA/TRMU family.

Its subcellular location is the cytoplasm. It carries out the reaction S-sulfanyl-L-cysteinyl-[protein] + uridine(34) in tRNA + AH2 + ATP = 2-thiouridine(34) in tRNA + L-cysteinyl-[protein] + A + AMP + diphosphate + H(+). Functionally, catalyzes the 2-thiolation of uridine at the wobble position (U34) of tRNA, leading to the formation of s(2)U34. The chain is tRNA-specific 2-thiouridylase MnmA from Rhodopseudomonas palustris (strain ATCC BAA-98 / CGA009).